The chain runs to 428 residues: Homocitrate synthase, cytosolic isozyme (428 aa).

A Pyruvate carboxyltransferase domain is found at 23–276 (FQLIDSTLRE…KSKYKLHKIR (254 aa)). Arginine 31 is a binding site for 2-oxoglutarate. Mg(2+) is bound at residue glutamate 32. 2-oxoglutarate contacts are provided by histidine 91, arginine 151, and threonine 185. Residues histidine 212 and histidine 214 each coordinate Mg(2+). Histidine 309 acts as the Proton acceptor in catalysis. Serine 385 bears the Phosphoserine mark. Threonine 396 carries the post-translational modification Phosphothreonine. The segment at 399–428 (VLSAKKNKKNDSDVPELATIPAAKRTKPSA) is disordered. Phosphoserine occurs at positions 401 and 410.

The protein belongs to the alpha-IPM synthase/homocitrate synthase family. Homocitrate synthase LYS20/LYS21 subfamily. Mg(2+) is required as a cofactor. It depends on Mn(2+) as a cofactor.

Its subcellular location is the cytoplasm. The enzyme catalyses acetyl-CoA + 2-oxoglutarate + H2O = (2R)-homocitrate + CoA + H(+). Its pathway is amino-acid biosynthesis; L-lysine biosynthesis via AAA pathway; L-alpha-aminoadipate from 2-oxoglutarate: step 1/5. Its function is as follows. Catalyzes the aldol-type condensation of 2-oxoglutarate with acetyl-CoA to yield homocitrate. Carries out the first step of the alpha-aminoadipate (AAA) lysine biosynthesis pathway. The polypeptide is Homocitrate synthase, cytosolic isozyme (LYS20) (Saccharomyces cerevisiae (strain ATCC 204508 / S288c) (Baker's yeast)).